Reading from the N-terminus, the 286-residue chain is Enoyl-CoA hydratase ChsH3 (286 aa).

Residues 163–271 (APERAPDLQV…RLVASVVAPT (109 aa)) form the MaoC-like domain. Residues aspartate 189 and histidine 194 contribute to the active site.

The protein belongs to the enoyl-CoA hydratase/isomerase family. Homodimer.

It catalyses the reaction (22E)-3-oxochola-4,22-dien-24-oyl-CoA + H2O = (22S)-hydroxy-3-oxo-chol-4-ene-24-oyl-CoA. Its pathway is steroid metabolism; cholesterol degradation. In terms of biological role, degradation of the cholesterol side chain involves 3 multistep beta-oxidation cycles, this is involved in the second cycle. Hydrates bulky steroid enoyl-CoA esters, has highest activity with 3-OCDO-CoA (3-oxochol-4,22-dien-24-oyl-CoA) making (22S)-HOCO-CoA, followed by octenoyl-CoA, with weaker activity on 3-OCDS-CoA (3-oxocholest-4,24-dien-26-oyl-CoA) and none on 3-OPDC-CoA (3-oxo-pregna-4,17-diene-20- carboxyl-CoA). Hydrates the same substrate as EchA19, but the 2 enzymes make different stereoisomers of the product. The chain is Enoyl-CoA hydratase ChsH3 from Mycobacterium tuberculosis (strain ATCC 25618 / H37Rv).